We begin with the raw amino-acid sequence, 239 residues long: MSQTQQALLQVQHVSKHYHDGEVTTQVLSGVDLTVYKGEQLAIVGSSGSGKSTLLHIMGTLDTPTSGTVLLDGEDLYQLSSARQAQIRNQDLGFIYQFHHLLPEFTAIENVAMPAFIQGRDKTQALVDAKNLLERVGLGHRLQHIPAQLSGGERQRVAIARALINKPKLVLADEPTGNLDASSGDNVYAMIRELAQQFGTAFVVVTHDHKLAAKMDRQLTMKDGILQVVAATSPTGLAE.

The ABC transporter domain maps to 9–239 (LQVQHVSKHY…AATSPTGLAE (231 aa)). 45-52 (GSSGSGKS) is an ATP binding site.

Belongs to the ABC transporter superfamily. Lipoprotein translocase (TC 3.A.1.125) family. In terms of assembly, the complex is composed of two ATP-binding proteins (LolD) and two transmembrane proteins (LolC and LolE).

It is found in the cell inner membrane. Its function is as follows. Part of the ABC transporter complex LolCDE involved in the translocation of mature outer membrane-directed lipoproteins, from the inner membrane to the periplasmic chaperone, LolA. Responsible for the formation of the LolA-lipoprotein complex in an ATP-dependent manner. This is Lipoprotein-releasing system ATP-binding protein LolD from Shewanella frigidimarina (strain NCIMB 400).